The following is a 112-amino-acid chain: Peptidyl-prolyl cis-trans isomerase FKBP12 (112 aa).

The interval 1–22 (MGVEKQIIRAGTGPNPSRGQNV) is disordered. A PPIase FKBP-type domain is found at 19–112 (GQNVTVHCTG…EFEIEVLRAQ (94 aa)). A disulfide bridge connects residues cysteine 26 and cysteine 80.

It belongs to the FKBP-type PPIase family. As to quaternary structure, interacts with FK506.

The protein resides in the cytoplasm. The enzyme catalyses [protein]-peptidylproline (omega=180) = [protein]-peptidylproline (omega=0). Its function is as follows. PPIases accelerate the folding of proteins. It catalyzes the cis-trans isomerization of proline imidic peptide bonds in oligopeptides. In Vicia faba (Broad bean), this protein is Peptidyl-prolyl cis-trans isomerase FKBP12 (FKBP12).